We begin with the raw amino-acid sequence, 298 residues long: Leucine-rich repeat-containing protein 55 (298 aa).

Positions 1-34 (MGDTWAQLPWPGPPHSALLLVFFLLAAGVMHSDA) are cleaved as a signal peptide. The LRRNT domain maps to 35–65 (GASCPVLCTCRNQVVDCSNQRLFSVPPDLPM). Intrachain disulfides connect C38/C44 and C42/C51. LRR repeat units follow at residues 66 to 87 (DTRN…YLTC), 90 to 111 (ELRV…LFLH), 114 to 135 (RLAH…MFRE), 138 to 160 (GLVH…AFQG), and 163 to 186 (HLRD…EGLP). Residues 196-251 (NPWVCGCTMEPLLKWLRNRIQRCTADSQLAECRGPPEVEGAPLFSLTEESFKACHL) form the LRRCT domain. Cystine bridges form between C200–C227 and C202–C249. The chain crosses the membrane as a helical span at residues 259-279 (LFIAFVGFVVSIASVATNFLL).

In terms of assembly, interacts with KCNMA1.

It localises to the cell membrane. Functionally, auxiliary protein of the large-conductance, voltage and calcium-activated potassium channel (BK alpha). Modulates gating properties by producing a marked shift in the BK channel's voltage dependence of activation in the hyperpolarizing direction, and in the absence of calcium. This is Leucine-rich repeat-containing protein 55 (Lrrc55) from Rattus norvegicus (Rat).